The chain runs to 121 residues: Small ribosomal subunit protein uS13 (121 aa).

A disordered region spans residues 91–121 (HRKGLPMRGQRTRTNARTRKGPRKAGVALKK).

The protein belongs to the universal ribosomal protein uS13 family. As to quaternary structure, part of the 30S ribosomal subunit. Forms a loose heterodimer with protein S19. Forms two bridges to the 50S subunit in the 70S ribosome.

Functionally, located at the top of the head of the 30S subunit, it contacts several helices of the 16S rRNA. In the 70S ribosome it contacts the 23S rRNA (bridge B1a) and protein L5 of the 50S subunit (bridge B1b), connecting the 2 subunits; these bridges are implicated in subunit movement. Contacts the tRNAs in the A and P-sites. This chain is Small ribosomal subunit protein uS13, found in Cupriavidus necator (strain ATCC 17699 / DSM 428 / KCTC 22496 / NCIMB 10442 / H16 / Stanier 337) (Ralstonia eutropha).